The following is a 173-amino-acid chain: Peptide methionine sulfoxide reductase MsrA (173 aa).

Cys10 is a catalytic residue.

The protein belongs to the MsrA Met sulfoxide reductase family.

The enzyme catalyses L-methionyl-[protein] + [thioredoxin]-disulfide + H2O = L-methionyl-(S)-S-oxide-[protein] + [thioredoxin]-dithiol. It carries out the reaction [thioredoxin]-disulfide + L-methionine + H2O = L-methionine (S)-S-oxide + [thioredoxin]-dithiol. Functionally, has an important function as a repair enzyme for proteins that have been inactivated by oxidation. Catalyzes the reversible oxidation-reduction of methionine sulfoxide in proteins to methionine. The sequence is that of Peptide methionine sulfoxide reductase MsrA from Psychrobacter cryohalolentis (strain ATCC BAA-1226 / DSM 17306 / VKM B-2378 / K5).